Consider the following 333-residue polypeptide: Gap junction alpha-4 protein (333 aa).

Residues 1–20 are Cytoplasmic-facing; it reads MGDWGFLEKLLDQVQEHSTV. A helical transmembrane segment spans residues 21-40; that stretch reads VGKIWLTVLFIFRILILGLA. Over 41–76 the chain is Extracellular; sequence GESVWGDEQSDFECNTAQPGCTNVCYDQAFPISHIR. The chain crosses the membrane as a helical span at residues 77–99; that stretch reads YWVLQFLFVSTPTLIYLGHVIYL. The Cytoplasmic segment spans residues 100–148; that stretch reads SRREERLRQKEGELRALPSKDLHVERALAAIEHQMAKISVAEDGRLRIR. A helical membrane pass occupies residues 149–171; sequence GALMGTYVVSVLCKSVLEAGFLY. Topologically, residues 172–208 are extracellular; that stretch reads GQWRLYGWTMEPVFVCQRAPCPHIVDCYVSRPTEKTI. Residues 209 to 231 traverse the membrane as a helical segment; that stretch reads FIIFMLVVGVISLVLNLLELVHL. The Cytoplasmic portion of the chain corresponds to 232–333; the sequence is LCRCVSREIK…NSSASKKQYV (102 aa). A disordered region spans residues 292-333; that stretch reads ANLTTEERLTSSRPPPFVNTAPQGGRKSPSRPNSSASKKQYV. Over residues 321–333 the composition is skewed to polar residues; the sequence is SRPNSSASKKQYV.

The protein belongs to the connexin family. Alpha-type (group II) subfamily. In terms of assembly, a connexon is composed of a hexamer of connexins. Highly expressed in lung.

The protein resides in the cell membrane. It localises to the cell junction. Its subcellular location is the gap junction. Functionally, one gap junction consists of a cluster of closely packed pairs of transmembrane channels, the connexons, through which materials of low MW diffuse from one cell to a neighboring cell. In Mus musculus (Mouse), this protein is Gap junction alpha-4 protein (Gja4).